A 659-amino-acid chain; its full sequence is tRNA (guanine(26)-N(2))-dimethyltransferase (659 aa).

The N-terminal 23 residues, 1 to 23 (MQGSSLWLSLTFRSARVLSRARF), are a transit peptide targeting the mitochondrion. The region spanning 55 to 499 (TTVTEGAAKI…APASALWDIM (445 aa)) is the Trm1 methyltransferase domain. Position 82 (Arg-82) interacts with S-adenosyl-L-methionine. Ser-120 is modified (phosphoserine). S-adenosyl-L-methionine-binding residues include Arg-166 and Asp-184. 4 residues coordinate Zn(2+): Cys-348, Cys-351, Cys-384, and Cys-387. Ser-517 bears the Phosphoserine mark. 2 disordered regions span residues 537-578 (EDAN…AMEE) and 616-659 (RGDQ…PGID). The short motif at 543–575 (SRQRGLKRFQANPEANWGPRPRARPGGKAADEA) is the Nuclear localization signal element. The segment at 600–627 (RLKTFPCKRFKEGTCQRGDQCCYSHSPP) adopts a C3H1-type zinc-finger fold. Position 625 is a phosphoserine (Ser-625). Residues Thr-628 and Thr-646 each carry the phosphothreonine modification.

It belongs to the class I-like SAM-binding methyltransferase superfamily. Trm1 family. (Microbial infection) Cleaved between Gln-530 and Ala-531 by the 3C-like proteinase nsp5 from human coronavirus SARS-CoV-2, leading to its inactivation.

It is found in the mitochondrion. It localises to the nucleus. Its subcellular location is the cytoplasm. It catalyses the reaction guanosine(26) in tRNA + 2 S-adenosyl-L-methionine = N(2)-dimethylguanosine(26) in tRNA + 2 S-adenosyl-L-homocysteine + 2 H(+). Its function is as follows. Dimethylates a single guanine residue at position 26 of most nuclear- and mitochondrial-encoded tRNAs using S-adenosyl-L-methionine as donor of the methyl groups. tRNA guanine(26)-dimethylation is required for redox homeostasis and ensure proper cellular proliferation and oxidative stress survival. This chain is tRNA (guanine(26)-N(2))-dimethyltransferase, found in Homo sapiens (Human).